A 251-amino-acid chain; its full sequence is MTAPRAPFFPADRSIRASDDPIEVQHLGTVDYRDSWDLQASLAEQRARDEIADQILVLEHPSVYTAGKRTQPEDLPTNGLPVIEVDRGGRITWHGPGQLVMYPIIKLAEPIDVVDYVRRLEEALIQTVRTFGVPEAGRVDGRSGVWVPAHDGYPDSKVAALGIRVTRGVTMHGLALNCNNTLEFYDHIIACGIEDAGLTTLSRELGRDVPTTELVDPLISDLDDAFAGRLTVADHSFASAPDPTRALPKRG.

Residues 49–230 (DEIADQILVL…DLDDAFAGRL (182 aa)) form the BPL/LPL catalytic domain. Residues 87–94 (RGGRITWH), 160–162 (ALG), and 173–175 (GLA) contribute to the substrate site. The active-site Acyl-thioester intermediate is the Cys-191.

Belongs to the LipB family.

The protein localises to the cytoplasm. It catalyses the reaction octanoyl-[ACP] + L-lysyl-[protein] = N(6)-octanoyl-L-lysyl-[protein] + holo-[ACP] + H(+). Its pathway is protein modification; protein lipoylation via endogenous pathway; protein N(6)-(lipoyl)lysine from octanoyl-[acyl-carrier-protein]: step 1/2. Catalyzes the transfer of endogenously produced octanoic acid from octanoyl-acyl-carrier-protein onto the lipoyl domains of lipoate-dependent enzymes. Lipoyl-ACP can also act as a substrate although octanoyl-ACP is likely to be the physiological substrate. The polypeptide is Octanoyltransferase (Corynebacterium efficiens (strain DSM 44549 / YS-314 / AJ 12310 / JCM 11189 / NBRC 100395)).